Here is a 194-residue protein sequence, read N- to C-terminus: Imidazoleglycerol-phosphate dehydratase (194 aa).

The protein belongs to the imidazoleglycerol-phosphate dehydratase family.

The protein localises to the cytoplasm. It catalyses the reaction D-erythro-1-(imidazol-4-yl)glycerol 3-phosphate = 3-(imidazol-4-yl)-2-oxopropyl phosphate + H2O. It functions in the pathway amino-acid biosynthesis; L-histidine biosynthesis; L-histidine from 5-phospho-alpha-D-ribose 1-diphosphate: step 6/9. This chain is Imidazoleglycerol-phosphate dehydratase, found in Bacillus cereus (strain G9842).